The primary structure comprises 177 residues: Dual-action ribosomal maturation protein DarP (177 aa).

The protein belongs to the DarP family.

The protein localises to the cytoplasm. In terms of biological role, member of a network of 50S ribosomal subunit biogenesis factors which assembles along the 30S-50S interface, preventing incorrect 23S rRNA structures from forming. Promotes peptidyl transferase center (PTC) maturation. The polypeptide is Dual-action ribosomal maturation protein DarP (Glaesserella parasuis serovar 5 (strain SH0165) (Haemophilus parasuis)).